Here is a 221-residue protein sequence, read N- to C-terminus: Ribosomal RNA large subunit methyltransferase E (221 aa).

Residues glycine 60, tryptophan 62, aspartate 89, aspartate 105, and aspartate 134 each coordinate S-adenosyl-L-methionine. Lysine 174 functions as the Proton acceptor in the catalytic mechanism. A disordered region spans residues 199–221; sequence KPKASRDKSSETFLLGRQLKHPG.

The protein belongs to the class I-like SAM-binding methyltransferase superfamily. RNA methyltransferase RlmE family.

The protein localises to the cytoplasm. The catalysed reaction is uridine(2552) in 23S rRNA + S-adenosyl-L-methionine = 2'-O-methyluridine(2552) in 23S rRNA + S-adenosyl-L-homocysteine + H(+). Functionally, specifically methylates the uridine in position 2552 of 23S rRNA at the 2'-O position of the ribose in the fully assembled 50S ribosomal subunit. This Ralstonia pickettii (strain 12J) protein is Ribosomal RNA large subunit methyltransferase E.